A 440-amino-acid polypeptide reads, in one-letter code: Phosphatidylcholine-sterol acyltransferase (440 aa).

The N-terminal stretch at 1 to 24 is a signal peptide; sequence MGPPGSPWQWVTLLLGLLLPPAAP. N44 carries N-linked (GlcNAc...) (complex) asparagine glycosylation. Residues C74 and C98 are joined by a disulfide bond. N108 carries N-linked (GlcNAc...) (complex) asparagine glycosylation. S205 (nucleophile) is an active-site residue. An N-linked (GlcNAc...) (complex) asparagine glycan is attached at N296. C337 and C380 form a disulfide bridge. Catalysis depends on charge relay system residues D369 and H401. N-linked (GlcNAc...) (complex) asparagine glycosylation occurs at N408. T431 is a glycosylation site (O-linked (GalNAc...) threonine). Residue S433 is glycosylated (O-linked (GalNAc...) serine).

The protein belongs to the AB hydrolase superfamily. Lipase family. Post-translationally, O- and N-glycosylated. O-glycosylation on Thr-431 and Ser-433 consists of sialylated galactose beta 1--&gt;3N-acetylgalactosamine structures. N-glycosylated sites contain sialylated triantennary and/or biantennary complex structures. In terms of tissue distribution, detected in blood plasma. Detected in cerebral spinal fluid (at protein level). Detected in liver. Expressed mainly in brain, liver and testes.

The protein localises to the secreted. The enzyme catalyses a sterol + a 1,2-diacyl-sn-glycero-3-phosphocholine = a sterol ester + a 1-acyl-sn-glycero-3-phosphocholine. The catalysed reaction is a 1-O-alkyl-2-acetyl-sn-glycero-3-phosphocholine + H2O = a 1-O-alkyl-sn-glycero-3-phosphocholine + acetate + H(+). It carries out the reaction a 1-hexadecanoyl-2-acyl-sn-glycero-3-phosphocholine + (24S)-hydroxycholesterol = (24S)-24-hydroxycholesterol ester + 1-hexadecanoyl-sn-glycero-3-phosphocholine. It catalyses the reaction (24S)-hydroxycholesterol + 1-hexadecanoyl-2-(9Z,12Z-octadecadienoyl)-sn-glycero-3-phosphocholine = (24S)-hydroxycholesterol 3-linoleoate + 1-hexadecanoyl-sn-glycero-3-phosphocholine. The enzyme catalyses 1-hexadecanoyl-2-(5Z,8Z,11Z,14Z-eicosatetraenoyl)-sn-glycero-3-phosphocholine + cholesterol = cholesteryl (5Z,8Z,11Z,14Z)-eicosatetraenoate + 1-hexadecanoyl-sn-glycero-3-phosphocholine. The catalysed reaction is 1-hexadecanoyl-2-(9Z-octadecenoyl)-sn-glycero-3-phosphocholine + cholesterol = cholesteryl (9Z-octadecenoate) + 1-hexadecanoyl-sn-glycero-3-phosphocholine. It carries out the reaction 1-hexadecanoyl-2-(8Z,11Z,14Z-eicosatrienoyl)-sn-glycero-3-phosphocholine + cholesterol = cholesteryl (8Z,11Z,14Z)-eicosatrienoate + 1-hexadecanoyl-sn-glycero-3-phosphocholine. It catalyses the reaction 1-hexadecanoyl-2-(5Z,8Z,11Z-eicosatrienoyl)-sn-glycero-3-phosphocholine + cholesterol = cholesteryl (5Z,8Z,11Z)-eicosatrienoate + 1-hexadecanoyl-sn-glycero-3-phosphocholine. The enzyme catalyses 1-hexadecanoyl-2-(5Z,8Z,11Z,14Z,17Z-eicosapentaenoyl)-sn-glycero-3-phosphocholine + cholesterol = (5Z,8Z,11Z,14Z,17Z-eicosapentaenoyl)-cholesterol + 1-hexadecanoyl-sn-glycero-3-phosphocholine. The catalysed reaction is 1-hexadecanoyl-2-(9Z,12Z-octadecadienoyl)-sn-glycero-3-phosphocholine + cholesterol = cholesteryl (9Z,12Z)-octadecadienoate + 1-hexadecanoyl-sn-glycero-3-phosphocholine. It carries out the reaction 1-hexadecanoyl-2-(6Z,9Z,12Z-octadecatrienoyl)-sn-glycero-3-phosphocholine + cholesterol = (6Z,9Z,12Z-octadecatrienoyl)-cholesterol + 1-hexadecanoyl-sn-glycero-3-phosphocholine. It catalyses the reaction 1-hexadecanoyl-2-(11Z,14Z,17Z-eicosatrienoyl)-sn-glycero-3-phosphocholine + cholesterol = (11Z,14Z,17Z-eicosatrienoyl)-cholesterol + 1-hexadecanoyl-sn-glycero-3-phosphocholine. The enzyme catalyses 1-hexadecanoyl-2-(9Z,12Z,15Z-octadecatrienoyl)-sn-glycero-3-phosphocholine + cholesterol = (9Z,12Z,15Z-octadecatrienoyl)-cholesterol + 1-hexadecanoyl-sn-glycero-3-phosphocholine. The catalysed reaction is 1-hexadecanoyl-2-(9Z,12Z-octadecadienoyl)-sn-glycero-3-phosphocholine + H2O = (9Z,12Z)-octadecadienoate + 1-hexadecanoyl-sn-glycero-3-phosphocholine + H(+). It carries out the reaction 1-hexadecanoyl-2-(5Z,8Z,11Z,14Z-eicosatetraenoyl)-sn-glycero-3-phosphocholine + H2O = 1-hexadecanoyl-sn-glycero-3-phosphocholine + (5Z,8Z,11Z,14Z)-eicosatetraenoate + H(+). It catalyses the reaction a 1-O-alkyl-2-acetyl-sn-glycero-3-phosphocholine + 1-hexadecanoyl-sn-glycero-3-phosphocholine = 1-hexadecanoyl-2-acetyl-sn-glycero-3-phosphocholine + a 1-O-alkyl-sn-glycero-3-phosphocholine. Its activity is regulated as follows. APOA1 is the most potent activator in plasma. Also activated by APOE, APOC1 and APOA4. Inhibited by haptoglobin and 5,5'-dithiobis-(2-nitrobenzoic acid) (DTNB). Its function is as follows. Central enzyme in the extracellular metabolism of plasma lipoproteins. Synthesized mainly in the liver and secreted into plasma where it converts cholesterol and phosphatidylcholines (lecithins) to cholesteryl esters and lysophosphatidylcholines on the surface of high and low density lipoproteins (HDLs and LDLs). The cholesterol ester is then transported back to the liver. Has a preference for plasma 16:0-18:2 or 18:O-18:2 phosphatidylcholines. Also produced in the brain by primary astrocytes, and esterifies free cholesterol on nascent APOE-containing lipoproteins secreted from glia and influences cerebral spinal fluid (CSF) APOE- and APOA1 levels. Together with APOE and the cholesterol transporter ABCA1, plays a key role in the maturation of glial-derived, nascent lipoproteins. Required for remodeling high-density lipoprotein particles into their spherical forms. Catalyzes the hydrolysis of 1-O-alkyl-2-acetyl-sn-glycero-3-phosphocholine (platelet-activating factor or PAF) to 1-O-alkyl-sn-glycero-3-phosphocholine (lyso-PAF). Also catalyzes the transfer of the acetate group from PAF to 1-hexadecanoyl-sn-glycero-3-phosphocholine forming lyso-PAF. Catalyzes the esterification of (24S)-hydroxycholesterol (24(S)OH-C), also known as cerebrosterol to produce 24(S)OH-C monoesters. In Homo sapiens (Human), this protein is Phosphatidylcholine-sterol acyltransferase (LCAT).